Here is a 184-residue protein sequence, read N- to C-terminus: Large ribosomal subunit protein uL15 (184 aa).

Positions 1–45 (MNLSSLRPAKGSVRNKKRVGRGQGSGNGTTAGKGNKGQQARSGYK) are disordered. Positions 21 to 35 (RGQGSGNGTTAGKGN) are enriched in gly residues.

The protein belongs to the universal ribosomal protein uL15 family. In terms of assembly, part of the 50S ribosomal subunit.

In terms of biological role, binds to the 23S rRNA. In Chlorobium chlorochromatii (strain CaD3), this protein is Large ribosomal subunit protein uL15.